Consider the following 244-residue polypeptide: Myrosinase MB1 (244 aa).

Residue Asn32 is glycosylated (N-linked (GlcNAc...) asparagine). Tyr51 contacts substrate. Residue Glu125 is the Nucleophile of the active site. Substrate contacts are provided by residues Trp173 and 180–181; that span reads EF. Residue Asn216 is glycosylated (N-linked (GlcNAc...) asparagine).

This sequence belongs to the glycosyl hydrolase 1 family. In terms of assembly, homodimer. In vacuoles called myrosin grains of a certain class of cells, myrosin cells, distributed in the cotyledons and the axis of the embryo as well as in different organs of the growing plant.

It localises to the vacuole. It catalyses the reaction a thioglucoside + H2O = a sugar + a thiol.. In terms of biological role, degradation of glucosinolates (glucose residue linked by a thioglucoside bound to an amino acid derivative) to glucose, sulfate and any of the products: thiocyanates, isothiocyanates, nitriles, epithionitriles or oxazolidine-2-thiones. This is Myrosinase MB1 from Sinapis alba (White mustard).